Here is a 162-residue protein sequence, read N- to C-terminus: MQLQGPVFVGVPLLGPILICMLIHQPSSRCEDERKLPWCPPHKVILLVWVTIYSVMGYASYLVWKELGGGFRWPLALPLGLYSFQLALSWTFLVLFLAADSPGLALLDLLLLYGLVASLVFIWQPINKLAALLLLPYLAWLTVTTAITYRLWRDSLCPTYQP.

The next 5 helical transmembrane spans lie at 3–23 (LQGP…CMLI), 44–64 (VILL…YLVW), 79–99 (LGLY…FLAA), 103–123 (GLAL…VFIW), and 129–149 (LAAL…AITY).

It belongs to the TspO/BZRP family. In terms of assembly, homotetramer. May also form homodimer. As to expression, expressed in liver, bone marrow and spleen. In spleen, detected in red pulp but not in white pulp.

The protein localises to the endoplasmic reticulum membrane. The protein resides in the cell membrane. Its function is as follows. Cholesterol-binding protein involved in the redistribution of cholesterol from lipid droplets to the endoplasmic reticulum. Required to meet cholesterol demands during erythropoietic differentiation. May play a role in transport processes at the plasma membrane of erythrocytes, including regulating VDAC-mediated ATP export, and import of the heme precursors protoporphyrin IX and 5-aminolevulinic acid. In Mus musculus (Mouse), this protein is Translocator protein 2 (Tspo2).